We begin with the raw amino-acid sequence, 275 residues long: Acetyl-coenzyme A carboxylase carboxyl transferase subunit beta (275 aa).

Residues 18–275 (KDNAGPAVPS…IHRLGGEMHA (258 aa)) form the CoA carboxyltransferase N-terminal domain. Residues 23 to 47 (PAVPSNTHSSKSNGNPVSEMKENKR) form a disordered region. A compositionally biased stretch (polar residues) spans 26 to 38 (PSNTHSSKSNGNP).

Belongs to the AccD/PCCB family. As to quaternary structure, acetyl-CoA carboxylase is a heterohexamer composed of biotin carboxyl carrier protein (AccB), biotin carboxylase (AccC) and two subunits each of ACCase subunit alpha (AccA) and ACCase subunit beta (AccD).

It localises to the cytoplasm. It catalyses the reaction N(6)-carboxybiotinyl-L-lysyl-[protein] + acetyl-CoA = N(6)-biotinyl-L-lysyl-[protein] + malonyl-CoA. Its pathway is lipid metabolism; malonyl-CoA biosynthesis; malonyl-CoA from acetyl-CoA: step 1/1. In terms of biological role, component of the acetyl coenzyme A carboxylase (ACC) complex. Biotin carboxylase (BC) catalyzes the carboxylation of biotin on its carrier protein (BCCP) and then the CO(2) group is transferred by the transcarboxylase to acetyl-CoA to form malonyl-CoA. The protein is Acetyl-coenzyme A carboxylase carboxyl transferase subunit beta of Alkaliphilus oremlandii (strain OhILAs) (Clostridium oremlandii (strain OhILAs)).